The chain runs to 340 residues: Large ribosomal subunit protein uL10 (340 aa).

The interval A305 to G340 is disordered. Positions K312–A331 are enriched in acidic residues.

Belongs to the universal ribosomal protein uL10 family. In terms of assembly, part of the 50S ribosomal subunit. Forms part of the ribosomal stalk which helps the ribosome interact with GTP-bound translation factors. Forms a heptameric L10(L12)2(L12)2(L12)2 complex, where L10 forms an elongated spine to which the L12 dimers bind in a sequential fashion.

Its function is as follows. Forms part of the ribosomal stalk, playing a central role in the interaction of the ribosome with GTP-bound translation factors. This chain is Large ribosomal subunit protein uL10, found in Thermococcus gammatolerans (strain DSM 15229 / JCM 11827 / EJ3).